Consider the following 305-residue polypeptide: Tyrosine recombinase XerC (305 aa).

In terms of domain architecture, Core-binding (CB) spans 1-93 (MVLDGFAAHF…SWRQYCVWLV (93 aa)). The 181-residue stretch at 114 to 294 (RVPKALPQEW…DFDHIARLYD (181 aa)) folds into the Tyr recombinase domain. Catalysis depends on residues Arg-155, Lys-179, His-246, Arg-249, and His-272. The active-site O-(3'-phospho-DNA)-tyrosine intermediate is Tyr-281.

The protein belongs to the 'phage' integrase family. XerC subfamily. Forms a cyclic heterotetrameric complex composed of two molecules of XerC and two molecules of XerD.

The protein resides in the cytoplasm. Functionally, site-specific tyrosine recombinase, which acts by catalyzing the cutting and rejoining of the recombining DNA molecules. The XerC-XerD complex is essential to convert dimers of the bacterial chromosome into monomers to permit their segregation at cell division. It also contributes to the segregational stability of plasmids. In Neisseria meningitidis serogroup C (strain 053442), this protein is Tyrosine recombinase XerC.